The sequence spans 431 residues: Histidine--tRNA ligase (431 aa).

Belongs to the class-II aminoacyl-tRNA synthetase family. As to quaternary structure, homodimer.

It localises to the cytoplasm. It catalyses the reaction tRNA(His) + L-histidine + ATP = L-histidyl-tRNA(His) + AMP + diphosphate + H(+). In Limosilactobacillus fermentum (strain NBRC 3956 / LMG 18251) (Lactobacillus fermentum), this protein is Histidine--tRNA ligase.